Here is a 357-residue protein sequence, read N- to C-terminus: Putative ankyrin repeat protein L42 (357 aa).

ANK repeat units follow at residues 34–63 (SCKQFIGLVCILTNNLNLLNLLVKKGNLKF), 86–115 (EQNECLKMSCIHGCLEILKYLISIGVDFRM), 116–145 (NDDEPLMLAIENGHLKIVQFLYSKRVNIRA), 147–175 (NNRPLVLSCEKGYINIVNFLLDKKASFVS), 176–205 (KQNEVFSTACGFGQMDIVKLLVEKGADINV), 206–235 (GKIPPIRAAAAGGHLNVIEHLVNKGASINK), 237–265 (SVDSLFSAAFYGHLNIVKYLLGYISEVNI), 267–294 (YYAFEKACINGHIDIVQYLFSENIITKD), and 301–331 (NTRYLFYHTIRNKHKHIIKFLIENNIFDKDK).

The chain is Putative ankyrin repeat protein L42 from Acanthamoeba polyphaga (Amoeba).